The chain runs to 194 residues: Holliday junction branch migration complex subunit RuvA (194 aa).

The domain I stretch occupies residues 1 to 64 (MISRLTGKLV…EDAHLLFGFA (64 aa)). The segment at 65-143 (TAEERKTFRQ…AHAVTDGLFA (79 aa)) is domain II. The interval 144-147 (AAPA) is flexible linker. A domain III region spans residues 147–194 (AADETEDIVGTLLALGYSEREAKAAVKGVPKGTDVGEGVRLALKNLLK).

The protein belongs to the RuvA family. In terms of assembly, homotetramer. Forms an RuvA(8)-RuvB(12)-Holliday junction (HJ) complex. HJ DNA is sandwiched between 2 RuvA tetramers; dsDNA enters through RuvA and exits via RuvB. An RuvB hexamer assembles on each DNA strand where it exits the tetramer. Each RuvB hexamer is contacted by two RuvA subunits (via domain III) on 2 adjacent RuvB subunits; this complex drives branch migration. In the full resolvosome a probable DNA-RuvA(4)-RuvB(12)-RuvC(2) complex forms which resolves the HJ.

It is found in the cytoplasm. Its function is as follows. The RuvA-RuvB-RuvC complex processes Holliday junction (HJ) DNA during genetic recombination and DNA repair, while the RuvA-RuvB complex plays an important role in the rescue of blocked DNA replication forks via replication fork reversal (RFR). RuvA specifically binds to HJ cruciform DNA, conferring on it an open structure. The RuvB hexamer acts as an ATP-dependent pump, pulling dsDNA into and through the RuvAB complex. HJ branch migration allows RuvC to scan DNA until it finds its consensus sequence, where it cleaves and resolves the cruciform DNA. The polypeptide is Holliday junction branch migration complex subunit RuvA (Neisseria meningitidis serogroup C / serotype 2a (strain ATCC 700532 / DSM 15464 / FAM18)).